The following is a 243-amino-acid chain: Ion-translocating oxidoreductase complex subunit E (243 aa).

A run of 6 helical transmembrane segments spans residues 40–60 (LGMGLATTVVLILSNVVISAL), 72–92 (AFILIIAAIVTVVDLALNAWL), 94–114 (DLHKVLGLFIALIVTNCAILG), 129–149 (ALDGLMMGIGFTLALVVVGAI), 152–172 (ILGSGTLFAQASLLLGPHFAF), and 183–203 (GFLIMILPPGGFLVVGGLFAL).

Belongs to the NqrDE/RnfAE family. As to quaternary structure, the complex is composed of six subunits: RnfA, RnfB, RnfC, RnfD, RnfE and RnfG.

The protein resides in the cellular chromatophore membrane. Part of a membrane-bound complex that couples electron transfer with translocation of ions across the membrane. Required for nitrogen fixation. Involved in electron transfer to nitrogenase. The polypeptide is Ion-translocating oxidoreductase complex subunit E (Rhodobacter capsulatus (Rhodopseudomonas capsulata)).